A 512-amino-acid chain; its full sequence is Maturase K (512 aa).

Belongs to the intron maturase 2 family. MatK subfamily.

The protein resides in the plastid. Its subcellular location is the chloroplast. In terms of biological role, usually encoded in the trnK tRNA gene intron. Probably assists in splicing its own and other chloroplast group II introns. In Wolffiella gladiata (Florida mud-midget), this protein is Maturase K.